Here is a 186-residue protein sequence, read N- to C-terminus: MQDSQKSSPGWHGTTILTVRKGGKVVIGGDGQVSIGQTVIKSNAKKVRKLGRGDVIGGFAGATADAFTLFERLEAKLEQYPGQLTRAAVELAKDWRTDRYLRRLEAMMIVADKDVSLVLTGTGDVLEPEAGVMAIGSGGNYALAAARALLDTDKDAETIVRRSLDIAADICVYTNRNVTIESLATG.

The active site involves T14. Positions 168, 171, and 174 each coordinate Na(+).

Belongs to the peptidase T1B family. HslV subfamily. In terms of assembly, a double ring-shaped homohexamer of HslV is capped on each side by a ring-shaped HslU homohexamer. The assembly of the HslU/HslV complex is dependent on binding of ATP.

The protein localises to the cytoplasm. It catalyses the reaction ATP-dependent cleavage of peptide bonds with broad specificity.. Its activity is regulated as follows. Allosterically activated by HslU binding. Functionally, protease subunit of a proteasome-like degradation complex believed to be a general protein degrading machinery. The sequence is that of ATP-dependent protease subunit HslV from Bradyrhizobium diazoefficiens (strain JCM 10833 / BCRC 13528 / IAM 13628 / NBRC 14792 / USDA 110).